A 313-amino-acid polypeptide reads, in one-letter code: Protein PHOSPHATE-INDUCED 1 (313 aa).

Positions 1 to 22 (MATSHFILKLFLVISFCNVCFA) are cleaved as a signal peptide. N-linked (GlcNAc...) asparagine glycosylation is present at asparagine 119.

This sequence belongs to the EXORDIUM family.

It localises to the secreted. The protein localises to the extracellular space. Its subcellular location is the apoplast. In terms of biological role, may be involved in the regulation of cell division. This chain is Protein PHOSPHATE-INDUCED 1, found in Nicotiana tabacum (Common tobacco).